The sequence spans 314 residues: Olfactory receptor 5P81 (314 aa).

Residues 1–28 (MAFLEDGNHTVVTEFILLGLTDDPVLRV) lie on the Extracellular side of the membrane. Asn8 carries an N-linked (GlcNAc...) asparagine glycan. Residues 29-49 (ILFIIILCIYLVTVSGNLSTI) form a helical membrane-spanning segment. Topologically, residues 50–57 (LLIRVSSQ) are cytoplasmic. A helical transmembrane segment spans residues 58–78 (LHHPMYFFLSHLASIDIAISS). The Extracellular segment spans residues 79–102 (SVTPNMVVNFLVERSSISYIGCGI). Cys100 and Cys192 are oxidised to a cystine. A helical membrane pass occupies residues 103-123 (QLGSAVFFGAIECFLLAVMAY). Topologically, residues 124-136 (DRFVAICNPLLYS) are cytoplasmic. The chain crosses the membrane as a helical span at residues 137-157 (TKMSKQVCIQLLVGSYIGGFI). Residues 158–199 (HASFFTLSFVSFLFCGPNRINHFFCDFTPLVELSCSDNSVLI) are Extracellular-facing. The chain crosses the membrane as a helical span at residues 200–220 (ILDSFSTGTIIVITVFVIAIS). At 221-240 (YTCILITILKMHSTEGRHKA) the chain is on the cytoplasmic side. A helical transmembrane segment spans residues 241–261 (FSTCTSHLTVVTLLYGTVTFI). Residues 262-274 (YVMPKSSYSTDQN) are Extracellular-facing. Residues 275–295 (KVISVFYMVVIPMLNPIIYSL) traverse the membrane as a helical segment. The Cytoplasmic portion of the chain corresponds to 296 to 314 (RNNEIKGALKKQLGEKNIF).

It belongs to the G-protein coupled receptor 1 family.

It localises to the cell membrane. Functionally, potential odorant receptor. This Mus musculus (Mouse) protein is Olfactory receptor 5P81.